A 440-amino-acid chain; its full sequence is 3-phosphoshikimate 1-carboxyvinyltransferase (440 aa).

Positions 29 and 34 each coordinate 3-phosphoshikimate. Lys-29 provides a ligand contact to phosphoenolpyruvate. Phosphoenolpyruvate contacts are provided by Gly-99 and Arg-128. Ser-171, Ser-172, Gln-173, Ser-199, Asp-316, and Lys-343 together coordinate 3-phosphoshikimate. Residue Gln-173 participates in phosphoenolpyruvate binding. Asp-316 acts as the Proton acceptor in catalysis. Phosphoenolpyruvate contacts are provided by Arg-347, Arg-390, and Lys-416.

It belongs to the EPSP synthase family. As to quaternary structure, monomer.

It is found in the cytoplasm. It carries out the reaction 3-phosphoshikimate + phosphoenolpyruvate = 5-O-(1-carboxyvinyl)-3-phosphoshikimate + phosphate. It functions in the pathway metabolic intermediate biosynthesis; chorismate biosynthesis; chorismate from D-erythrose 4-phosphate and phosphoenolpyruvate: step 6/7. In terms of biological role, catalyzes the transfer of the enolpyruvyl moiety of phosphoenolpyruvate (PEP) to the 5-hydroxyl of shikimate-3-phosphate (S3P) to produce enolpyruvyl shikimate-3-phosphate and inorganic phosphate. The protein is 3-phosphoshikimate 1-carboxyvinyltransferase of Deinococcus geothermalis (strain DSM 11300 / CIP 105573 / AG-3a).